The primary structure comprises 255 residues: Triosephosphate isomerase (255 aa).

Residue 9–11 (NWK) coordinates substrate. His95 (electrophile) is an active-site residue. The active-site Proton acceptor is Glu167. Substrate-binding positions include Gly173, Ser212, and 233–234 (GG).

The protein belongs to the triosephosphate isomerase family. Homodimer.

It is found in the cytoplasm. It catalyses the reaction D-glyceraldehyde 3-phosphate = dihydroxyacetone phosphate. The protein operates within carbohydrate biosynthesis; gluconeogenesis. It participates in carbohydrate degradation; glycolysis; D-glyceraldehyde 3-phosphate from glycerone phosphate: step 1/1. In terms of biological role, involved in the gluconeogenesis. Catalyzes stereospecifically the conversion of dihydroxyacetone phosphate (DHAP) to D-glyceraldehyde-3-phosphate (G3P). The protein is Triosephosphate isomerase of Enterobacter cloacae.